The sequence spans 317 residues: Beta-ketoacyl-[acyl-carrier-protein] synthase III (317 aa).

Active-site residues include cysteine 112 and histidine 244. Positions 245–249 are ACP-binding; the sequence is QANLR. Asparagine 274 is a catalytic residue.

It belongs to the thiolase-like superfamily. FabH family. In terms of assembly, homodimer.

The protein localises to the cytoplasm. The catalysed reaction is malonyl-[ACP] + acetyl-CoA + H(+) = 3-oxobutanoyl-[ACP] + CO2 + CoA. The protein operates within lipid metabolism; fatty acid biosynthesis. Its function is as follows. Catalyzes the condensation reaction of fatty acid synthesis by the addition to an acyl acceptor of two carbons from malonyl-ACP. Catalyzes the first condensation reaction which initiates fatty acid synthesis and may therefore play a role in governing the total rate of fatty acid production. Possesses both acetoacetyl-ACP synthase and acetyl transacylase activities. Its substrate specificity determines the biosynthesis of branched-chain and/or straight-chain of fatty acids. The protein is Beta-ketoacyl-[acyl-carrier-protein] synthase III of Salmonella arizonae (strain ATCC BAA-731 / CDC346-86 / RSK2980).